We begin with the raw amino-acid sequence, 257 residues long: Aspartate/glutamate leucyltransferase (257 aa).

This sequence belongs to the R-transferase family. Bpt subfamily.

The protein resides in the cytoplasm. It catalyses the reaction N-terminal L-glutamyl-[protein] + L-leucyl-tRNA(Leu) = N-terminal L-leucyl-L-glutamyl-[protein] + tRNA(Leu) + H(+). The enzyme catalyses N-terminal L-aspartyl-[protein] + L-leucyl-tRNA(Leu) = N-terminal L-leucyl-L-aspartyl-[protein] + tRNA(Leu) + H(+). Functionally, functions in the N-end rule pathway of protein degradation where it conjugates Leu from its aminoacyl-tRNA to the N-termini of proteins containing an N-terminal aspartate or glutamate. In Nitrobacter winogradskyi (strain ATCC 25391 / DSM 10237 / CIP 104748 / NCIMB 11846 / Nb-255), this protein is Aspartate/glutamate leucyltransferase.